Reading from the N-terminus, the 93-residue chain is Putative pterin-4-alpha-carbinolamine dehydratase (93 aa).

Belongs to the pterin-4-alpha-carbinolamine dehydratase family.

It carries out the reaction (4aS,6R)-4a-hydroxy-L-erythro-5,6,7,8-tetrahydrobiopterin = (6R)-L-erythro-6,7-dihydrobiopterin + H2O. This Trichormus variabilis (strain ATCC 29413 / PCC 7937) (Anabaena variabilis) protein is Putative pterin-4-alpha-carbinolamine dehydratase.